The primary structure comprises 492 residues: NAD(P)H-quinone oxidoreductase subunit 2 A, chloroplastic (492 aa).

The next 13 helical transmembrane spans lie at Leu6 to Leu26, Ile39 to Phe59, Ile81 to Ile101, Met106 to Cys126, Leu131 to Tyr151, Tyr165 to Gly185, Pro209 to Ala229, Trp277 to Ile297, Met305 to Asp325, Tyr336 to Leu356, Ala377 to Phe397, Leu400 to Leu420, and Phe464 to Ile484.

The protein belongs to the complex I subunit 2 family. As to quaternary structure, NDH is composed of at least 16 different subunits, 5 of which are encoded in the nucleus.

It localises to the plastid. Its subcellular location is the chloroplast thylakoid membrane. It carries out the reaction a plastoquinone + NADH + (n+1) H(+)(in) = a plastoquinol + NAD(+) + n H(+)(out). It catalyses the reaction a plastoquinone + NADPH + (n+1) H(+)(in) = a plastoquinol + NADP(+) + n H(+)(out). NDH shuttles electrons from NAD(P)H:plastoquinone, via FMN and iron-sulfur (Fe-S) centers, to quinones in the photosynthetic chain and possibly in a chloroplast respiratory chain. The immediate electron acceptor for the enzyme in this species is believed to be plastoquinone. Couples the redox reaction to proton translocation, and thus conserves the redox energy in a proton gradient. This is NAD(P)H-quinone oxidoreductase subunit 2 A, chloroplastic from Phaseolus vulgaris (Kidney bean).